A 273-amino-acid polypeptide reads, in one-letter code: Formamidopyrimidine-DNA glycosylase (273 aa).

P2 (schiff-base intermediate with DNA) is an active-site residue. Catalysis depends on E3, which acts as the Proton donor. Catalysis depends on K58, which acts as the Proton donor; for beta-elimination activity. H92, R111, and K153 together coordinate DNA. The FPG-type zinc-finger motif lies at 238–272 (KVYGREGQSCLSCSSTIIKIKHSGRSTFYCKTCQY). R262 acts as the Proton donor; for delta-elimination activity in catalysis.

The protein belongs to the FPG family. Monomer. Zn(2+) is required as a cofactor.

It catalyses the reaction Hydrolysis of DNA containing ring-opened 7-methylguanine residues, releasing 2,6-diamino-4-hydroxy-5-(N-methyl)formamidopyrimidine.. It carries out the reaction 2'-deoxyribonucleotide-(2'-deoxyribose 5'-phosphate)-2'-deoxyribonucleotide-DNA = a 3'-end 2'-deoxyribonucleotide-(2,3-dehydro-2,3-deoxyribose 5'-phosphate)-DNA + a 5'-end 5'-phospho-2'-deoxyribonucleoside-DNA + H(+). Its function is as follows. Involved in base excision repair of DNA damaged by oxidation or by mutagenic agents. Acts as a DNA glycosylase that recognizes and removes damaged bases. Has a preference for oxidized purines, such as 7,8-dihydro-8-oxoguanine (8-oxoG). Has AP (apurinic/apyrimidinic) lyase activity and introduces nicks in the DNA strand. Cleaves the DNA backbone by beta-delta elimination to generate a single-strand break at the site of the removed base with both 3'- and 5'-phosphates. In Rickettsia africae (strain ESF-5), this protein is Formamidopyrimidine-DNA glycosylase.